Reading from the N-terminus, the 246-residue chain is 23S rRNA (guanosine-2'-O-)-methyltransferase RlmB (246 aa).

S-adenosyl-L-methionine contacts are provided by Gly198, Ile218, and Leu227.

The protein belongs to the class IV-like SAM-binding methyltransferase superfamily. RNA methyltransferase TrmH family. RlmB subfamily.

The protein resides in the cytoplasm. The catalysed reaction is guanosine(2251) in 23S rRNA + S-adenosyl-L-methionine = 2'-O-methylguanosine(2251) in 23S rRNA + S-adenosyl-L-homocysteine + H(+). Functionally, specifically methylates the ribose of guanosine 2251 in 23S rRNA. This chain is 23S rRNA (guanosine-2'-O-)-methyltransferase RlmB, found in Shewanella oneidensis (strain ATCC 700550 / JCM 31522 / CIP 106686 / LMG 19005 / NCIMB 14063 / MR-1).